A 203-amino-acid chain; its full sequence is Mitotic spindle checkpoint component mad2 (203 aa).

One can recognise an HORMA domain in the interval 13–197 (KGSSKLVSEF…TSMHKIDCQV (185 aa)).

This sequence belongs to the MAD2 family. In terms of assembly, interacts with mad3 and slp1.

The protein localises to the nucleus. Functionally, feedback control that prevents cells with incompletely assembled spindles from leaving mitosis. It interacts with the anaphase promoting complex/cyclosome (APC/C) thereby inhibiting APC/C-dependent proteolysis, a step required for exit from mitosis. The sequence is that of Mitotic spindle checkpoint component mad2 from Schizosaccharomyces pombe (strain 972 / ATCC 24843) (Fission yeast).